The sequence spans 486 residues: Cardiolipin synthase A (486 aa).

2 consecutive transmembrane segments (helical) span residues 3-23 (TFYT…IAGV) and 38-58 (MAWL…YLSF). 2 consecutive PLD phosphodiesterase domains span residues 219–246 (MDLR…VDPR) and 399–426 (KDGL…DMRS). Catalysis depends on residues H224, K226, D231, H404, K406, and D411.

The protein belongs to the phospholipase D family. Cardiolipin synthase subfamily. ClsA sub-subfamily.

It localises to the cell inner membrane. It catalyses the reaction 2 a 1,2-diacyl-sn-glycero-3-phospho-(1'-sn-glycerol) = a cardiolipin + glycerol. Functionally, catalyzes the reversible phosphatidyl group transfer from one phosphatidylglycerol molecule to another to form cardiolipin (CL) (diphosphatidylglycerol) and glycerol. The chain is Cardiolipin synthase A from Pectobacterium carotovorum subsp. carotovorum (strain PC1).